The sequence spans 470 residues: MLQLYNTLTNQKEKFEPLNPGKVTMYVCGPTVYNYIHIGNARSAVAFDTIRRYLEYRGFEVNYVSNFTDVDDKIIKASQEMNLSVKEITEKFINAFYEDTSALNVKKATLNPRVMDNMDDIIKFIEVLVQKGYAYESAGDVYYKTRKFKDYGKLSGQLIDDLEQGASSRVDDIDQDKKQDPLDFALWKKVKQGEISWNSPWGQGRPGWHIECSVMSTKYLGDTIDIHAGGQDLEFPHHENEIAQSEAKTGKKFARYWLHNGFVTIGEEDQKMSKSLGNFVTVHDLLKKVNPQVIRFFMSTTQYRRPIRYSSANLNEAKVNLNKLQTAYENLSYRLKDSVEGNDKEVEVNFANLEKDFVKVMDDDFNVQNGISVVYEMAKQLNVYSEKEKVYTDTINNLINTYKKVVEIFGISFSEEKELLDDTIEQLIQERNEARKNKNFKRSDEIRDLLKEQGIILEDTAQGTRWKRND.

Cys28 contributes to the Zn(2+) binding site. A 'HIGH' region motif is present at residues 30-40 (PTVYNYIHIGN). Positions 212, 237, and 241 each coordinate Zn(2+). The 'KMSKS' region signature appears at 271–275 (KMSKS). Lys274 provides a ligand contact to ATP.

It belongs to the class-I aminoacyl-tRNA synthetase family. Monomer. It depends on Zn(2+) as a cofactor.

It localises to the cytoplasm. The enzyme catalyses tRNA(Cys) + L-cysteine + ATP = L-cysteinyl-tRNA(Cys) + AMP + diphosphate. The protein is Cysteine--tRNA ligase of Ligilactobacillus salivarius (strain UCC118) (Lactobacillus salivarius).